A 551-amino-acid chain; its full sequence is Chaperonin GroEL (551 aa).

Residues 30-33 (TLGP), Lys51, 87-91 (DGTTT), Gly415, 478-480 (NAA), and Asp494 contribute to the ATP site.

It belongs to the chaperonin (HSP60) family. As to quaternary structure, forms a cylinder of 14 subunits composed of two heptameric rings stacked back-to-back. Interacts with the co-chaperonin GroES.

The protein localises to the cytoplasm. The enzyme catalyses ATP + H2O + a folded polypeptide = ADP + phosphate + an unfolded polypeptide.. In terms of biological role, together with its co-chaperonin GroES, plays an essential role in assisting protein folding. The GroEL-GroES system forms a nano-cage that allows encapsulation of the non-native substrate proteins and provides a physical environment optimized to promote and accelerate protein folding. The polypeptide is Chaperonin GroEL (Syntrophotalea carbinolica (strain DSM 2380 / NBRC 103641 / GraBd1) (Pelobacter carbinolicus)).